The following is a 330-amino-acid chain: MTLIVTGAAGFIGANIVKALNERGETRIIAVDNLTRADKFRNLVDCEIDDYLDKTEFVERFARGDFGKVRAVFHEGACSDTMETDGRYMMDNNFRYSRAVLDTCLAQGTQFLYASSAAIYGGSTRFVEERDVEAPLNVYGYSKFLFDQVIRRVLPSAKSQIAGFRYFNVYGPRETHKGRMASVAFHNFNQFRAEGKVKLFGEYNGYAPGEQTRDFVSVEDVTKVNLFFFDHPEKSGIFNLGTGRAQPFNDIASTVVNTLRALDNQAPLTLAQQVEQGLIEYVPFPDALRGKYQCFTQADQTKLRAAGYDAPFLTVQEGVDRYVRWLSGQV.

Residues F11–I12, D32–N33, K39, K54, E75–S79, and N92 each bind NADP(+). The active-site Proton acceptor is Y139. Residue K143 coordinates NADP(+). N168 provides a ligand contact to substrate. Residues V169 and K177 each coordinate NADP(+). The active-site Proton acceptor is the K177. Substrate contacts are provided by residues R179, H186, F200–Y203, R213, and Y292.

It belongs to the NAD(P)-dependent epimerase/dehydratase family. HldD subfamily. In terms of assembly, homopentamer. The cofactor is NADP(+).

The catalysed reaction is ADP-D-glycero-beta-D-manno-heptose = ADP-L-glycero-beta-D-manno-heptose. Its pathway is nucleotide-sugar biosynthesis; ADP-L-glycero-beta-D-manno-heptose biosynthesis; ADP-L-glycero-beta-D-manno-heptose from D-glycero-beta-D-manno-heptose 7-phosphate: step 4/4. Functionally, catalyzes the interconversion between ADP-D-glycero-beta-D-manno-heptose and ADP-L-glycero-beta-D-manno-heptose via an epimerization at carbon 6 of the heptose. The sequence is that of ADP-L-glycero-D-manno-heptose-6-epimerase from Burkholderia cenocepacia (strain HI2424).